The primary structure comprises 324 residues: Beta-ketoacyl-[acyl-carrier-protein] synthase III (324 aa).

Cys-112 is an active-site residue. The segment at 181–202 is disordered; that stretch reads TDGSRGQNLTSGNNPLRSPFSD. The segment covering 184–196 has biased composition (polar residues); sequence SRGQNLTSGNNPL. Residue His-249 is part of the active site. Positions 250 to 254 are ACP-binding; it reads QANRR. Asn-279 is an active-site residue.

It belongs to the thiolase-like superfamily. FabH family. In terms of assembly, homodimer.

Its subcellular location is the cytoplasm. The catalysed reaction is malonyl-[ACP] + acetyl-CoA + H(+) = 3-oxobutanoyl-[ACP] + CO2 + CoA. The protein operates within lipid metabolism; fatty acid biosynthesis. Its function is as follows. Catalyzes the condensation reaction of fatty acid synthesis by the addition to an acyl acceptor of two carbons from malonyl-ACP. Catalyzes the first condensation reaction which initiates fatty acid synthesis and may therefore play a role in governing the total rate of fatty acid production. Possesses both acetoacetyl-ACP synthase and acetyl transacylase activities. Its substrate specificity determines the biosynthesis of branched-chain and/or straight-chain of fatty acids. The sequence is that of Beta-ketoacyl-[acyl-carrier-protein] synthase III from Streptococcus uberis (strain ATCC BAA-854 / 0140J).